Here is a 261-residue protein sequence, read N- to C-terminus: MDKDLSLDNLRKKIRSNEFTKATSGYAPGYLQANLVILPALWATDFLLFCQKNPVACPLIDVTQPGERYLPSIGADIDLSRDVPEYHVFYEGNFEASVPDLTELWQDDLVTFVLGCSFSFEEALIQSGLSIRNIDDGKNVSMYDTNIACQPAGKFDGNFVVSMRPFTPKDAIRAIQITTRFPKSHGAPVHFGDPSVIGISDIAKPNYGEAVHINSDEIPVFWACGVTPQNVIRQSRPPFCITHAPGKMLITDRLSSEFAVL.

It belongs to the D-glutamate cyclase family.

The sequence is that of Putative hydro-lyase VSAL_I1435 from Aliivibrio salmonicida (strain LFI1238) (Vibrio salmonicida (strain LFI1238)).